A 240-amino-acid polypeptide reads, in one-letter code: Adiponectin (240 aa).

A signal peptide spans 1–17; it reads MLLQGALLLLLALPSHG. 5-hydroxylysine is present on lysine 28. Lysine 28 carries O-linked (Gal...) hydroxylysine glycosylation. The disordered stretch occupies residues 29–100; the sequence is GACAGWMAGI…GTPGRKGEPG (72 aa). S-(2-succinyl)cysteine is present on cysteine 31. Proline 39, proline 42, and proline 48 each carry 4-hydroxyproline. One can recognise a Collagen-like domain in the interval 43–102; the sequence is GHNGTPGRDGRDGTPGEKGEKGDPGLVGPKGDTGETGITGIEGPRGFPGTPGRKGEPGES. Over residues 50 to 65 the composition is skewed to basic and acidic residues; the sequence is RDGRDGTPGEKGEKGD. 5-hydroxylysine occurs at positions 60, 63, and 72. O-linked (Gal...) hydroxylysine glycosylation is found at lysine 60, lysine 63, and lysine 72. At proline 86 the chain carries 4-hydroxyproline. At lysine 96 the chain carries 5-hydroxylysine. O-linked (Gal...) hydroxylysine glycosylation is present at lysine 96. The C1q domain occupies 103–240; that stretch reads AYVYRSAFSV…GFLLYHNIVE (138 aa).

As to quaternary structure, homomultimer. Forms trimers, hexamers and 12- to 18-mers. The trimers (low molecular weight complexes / LMW) are assembled via non-covalent interactions of the collagen-like domains in a triple helix and hydrophobic interactions within the globular C1q domain. Several trimers can associate to form disulfide-linked hexamers (middle molecular weight complexes / MMW) and larger complexes (higher molecular weight / HMW). The HMW-complex assembly is also modulated by the degree of lysine hydroxylation and glycosylation. LMW, MMW and HMW complexes bind to HBEGF, MMW and HMW complexes bind to PDGFB, and HMW complex binds to FGF2. Interacts with CTRP9 via the C1q domain (heterotrimeric complex). In terms of processing, HMW complexes are more extensively glycosylated than smaller oligomers. Hydroxylation and glycosylation of the lysine residues within the collagen-like domain of adiponectin seem to be critically involved in regulating the formation and/or secretion of HMW complexes and consequently contribute to the insulin-sensitizing activity of adiponectin in hepatocytes. O-glycosylated. O-linked glycans on hydroxylysine residues consist of Glc-Gal disaccharides bound to the oxygen atom of post-translationally added hydroxyl groups. O-linked glycosylations elsewhere disialylated with the structure Neu5Acalpha2-&gt;8Neu5Acalpha2-&gt;3Gal. Sialylated by alpha 2,8-sialyltransferase III. Desialylated forms are rapidly cleared from the circulation. Not N-glycosylated. Post-translationally, succination of Cys-31 by the Krebs cycle intermediate fumarate, which leads to S-(2-succinyl)cysteine residues, inhibits polymerization and secretion of adiponectin. Adiponectin is a major target for succination in both adipocytes and adipose tissue of diabetic mammals. It was proposed that succination of proteins is a biomarker of mitochondrial stress and accumulation of Krebs cycle intermediates in adipose tissue in diabetes and that succination of adiponectin may contribute to the decrease in plasma adiponectin in diabetes.

The protein localises to the secreted. Polymerization and secretion of adiponectin is inhibited by succination of cysteine residues by the Krebs cycle intermediate fumarate, which leads to S-(2-succinyl)cysteine residues. Functionally, important adipokine involved in the control of fat metabolism and insulin sensitivity, with direct anti-diabetic, anti-atherogenic and anti-inflammatory activities. Stimulates AMPK phosphorylation and activation in the liver and the skeletal muscle, enhancing glucose utilization and fatty-acid combustion. Antagonizes TNF-alpha by negatively regulating its expression in various tissues such as liver and macrophages, and also by counteracting its effects. Inhibits endothelial NF-kappa-B signaling through a cAMP-dependent pathway. May play a role in cell growth, angiogenesis and tissue remodeling by binding and sequestering various growth factors with distinct binding affinities, depending on the type of complex, LMW, MMW or HMW. The sequence is that of Adiponectin (ADIPOQ) from Bos taurus (Bovine).